The chain runs to 513 residues: Putative GMP synthase [glutamine-hydrolyzing] (513 aa).

One can recognise a Glutamine amidotransferase type-1 domain in the interval methionine 8–asparagine 198. Cysteine 85 functions as the Nucleophile in the catalytic mechanism. Glutamate 174 is a catalytic residue. Positions tryptophan 199–arginine 388 constitute a GMPS ATP-PPase domain. Residue serine 226–serine 232 coordinates ATP.

Homodimer.

It catalyses the reaction XMP + L-glutamine + ATP + H2O = GMP + L-glutamate + AMP + diphosphate + 2 H(+). The protein operates within purine metabolism; GMP biosynthesis; GMP from XMP (L-Gln route): step 1/1. In terms of biological role, catalyzes the synthesis of GMP from XMP. The polypeptide is Putative GMP synthase [glutamine-hydrolyzing] (guaA) (Halalkalibacterium halodurans (strain ATCC BAA-125 / DSM 18197 / FERM 7344 / JCM 9153 / C-125) (Bacillus halodurans)).